The primary structure comprises 86 residues: DNA-directed RNA polymerase subunit omega (86 aa).

Belongs to the RNA polymerase subunit omega family. The RNAP catalytic core consists of 2 alpha, 1 beta, 1 beta' and 1 omega subunit. When a sigma factor is associated with the core the holoenzyme is formed, which can initiate transcription.

It carries out the reaction RNA(n) + a ribonucleoside 5'-triphosphate = RNA(n+1) + diphosphate. Its function is as follows. Promotes RNA polymerase assembly. Latches the N- and C-terminal regions of the beta' subunit thereby facilitating its interaction with the beta and alpha subunits. The chain is DNA-directed RNA polymerase subunit omega from Agathobacter rectalis (strain ATCC 33656 / DSM 3377 / JCM 17463 / KCTC 5835 / VPI 0990) (Eubacterium rectale).